The primary structure comprises 647 residues: DNA mismatch repair protein MutL (647 aa).

It belongs to the DNA mismatch repair MutL/HexB family.

This protein is involved in the repair of mismatches in DNA. It is required for dam-dependent methyl-directed DNA mismatch repair. May act as a 'molecular matchmaker', a protein that promotes the formation of a stable complex between two or more DNA-binding proteins in an ATP-dependent manner without itself being part of a final effector complex. The sequence is that of DNA mismatch repair protein MutL from Koribacter versatilis (strain Ellin345).